The sequence spans 1391 residues: DNA-directed RNA polymerase subunit beta (1391 aa).

It belongs to the RNA polymerase beta chain family. As to quaternary structure, the RNAP catalytic core consists of 2 alpha, 1 beta, 1 beta' and 1 omega subunit. When a sigma factor is associated with the core the holoenzyme is formed, which can initiate transcription.

The enzyme catalyses RNA(n) + a ribonucleoside 5'-triphosphate = RNA(n+1) + diphosphate. DNA-dependent RNA polymerase catalyzes the transcription of DNA into RNA using the four ribonucleoside triphosphates as substrates. The chain is DNA-directed RNA polymerase subunit beta from Mycoplasma pneumoniae (strain ATCC 29342 / M129 / Subtype 1) (Mycoplasmoides pneumoniae).